Here is a 208-residue protein sequence, read N- to C-terminus: Uracil phosphoribosyltransferase (208 aa).

Residues Arg78, Arg103, and 130–138 each bind 5-phospho-alpha-D-ribose 1-diphosphate; that span reads DPMLATGGS. Uracil-binding positions include Ile193 and 198–200; that span reads GDA. Residue Asp199 coordinates 5-phospho-alpha-D-ribose 1-diphosphate.

It belongs to the UPRTase family. It depends on Mg(2+) as a cofactor.

The catalysed reaction is UMP + diphosphate = 5-phospho-alpha-D-ribose 1-diphosphate + uracil. The protein operates within pyrimidine metabolism; UMP biosynthesis via salvage pathway; UMP from uracil: step 1/1. With respect to regulation, allosterically activated by GTP. Functionally, catalyzes the conversion of uracil and 5-phospho-alpha-D-ribose 1-diphosphate (PRPP) to UMP and diphosphate. The chain is Uracil phosphoribosyltransferase from Glaesserella parasuis serovar 5 (strain SH0165) (Haemophilus parasuis).